A 231-amino-acid polypeptide reads, in one-letter code: MNQSDTSLIPNRAVAIFSGGMDSFTLLNELVQEGKEVFALSFNYGQRHSKELECARQVCESLNIAHKIIDITAINSLLAGSSLTDDIQVPEGHYEEENMKSTVVPNRNMILLSLAIGYAVSLKAEAVYYGAHGGDHAIYPDCRPAFVEIMSEASKLANYEPVEVRAPYLYETKIEILRRGLALGLDYGQTWTCYNGREKACGKCGSCVERLEAFDKNDATDPLAYESVCTG.

17–27 (FSGGMDSFTLL) provides a ligand contact to ATP. Residues Cys-193, Cys-201, Cys-204, and Cys-207 each contribute to the Zn(2+) site.

The protein belongs to the QueC family. The cofactor is Zn(2+).

It catalyses the reaction 7-carboxy-7-deazaguanine + NH4(+) + ATP = 7-cyano-7-deazaguanine + ADP + phosphate + H2O + H(+). Its pathway is purine metabolism; 7-cyano-7-deazaguanine biosynthesis. Functionally, catalyzes the ATP-dependent conversion of 7-carboxy-7-deazaguanine (CDG) to 7-cyano-7-deazaguanine (preQ(0)). This Hahella chejuensis (strain KCTC 2396) protein is 7-cyano-7-deazaguanine synthase.